A 455-amino-acid polypeptide reads, in one-letter code: MTLTQEFDTIAAISTPLGEGAIAIVRLSGTDALKIAQSVYKGKNLAQVASHTINYGHIFEEERLVDEVMVSVMRAPKTFTREDIVEINTHGGIAVTQEILQLLLRNGARLAEPGEFTKRAFLNGRIDLAQAESVMDLIRAKTDKAANIAVKQLDGSLSKMINNIRQEILESLAQVEVNIDYPEYDDVETMTSQMLLEKTAHFEQLLENLLSTAKRGKILREGLKTAIIGRPNVGKSSLLNQLLREEKAIVTDIAGTTRDVITEFANIGGVPLELVDTAGIRETDDLVEAIGIERSKKALAEADLVLLVLDASLELTDKDLELLELSKNANRIVLLNKTDLPEKLDINQISGDFIRISALKNENLSAVEEKINQIFFAGEIEAKDATVLSNARHISLVEEALKALKEANNGLALGLPVDLIQVDVTRCWQLLGEITGEAAPDELITQLFSQFCLGK.

(6S)-5-formyl-5,6,7,8-tetrahydrofolate contacts are provided by Arg26, Glu86, and Arg125. Residues 222–376 (GLKTAIIGRP…VEEKINQIFF (155 aa)) enclose the TrmE-type G domain. Position 232 (Asn232) interacts with K(+). GTP-binding positions include 232 to 237 (NVGKSS), 251 to 257 (TDIAGTT), and 276 to 279 (DTAG). Position 236 (Ser236) interacts with Mg(2+). The K(+) site is built by Thr251, Ile253, and Thr256. Thr257 lines the Mg(2+) pocket. Residue Lys455 participates in (6S)-5-formyl-5,6,7,8-tetrahydrofolate binding.

Belongs to the TRAFAC class TrmE-Era-EngA-EngB-Septin-like GTPase superfamily. TrmE GTPase family. In terms of assembly, homodimer. Heterotetramer of two MnmE and two MnmG subunits. Requires K(+) as cofactor.

Its subcellular location is the cytoplasm. Functionally, exhibits a very high intrinsic GTPase hydrolysis rate. Involved in the addition of a carboxymethylaminomethyl (cmnm) group at the wobble position (U34) of certain tRNAs, forming tRNA-cmnm(5)s(2)U34. This is tRNA modification GTPase MnmE from Lactococcus lactis subsp. cremoris (strain MG1363).